Reading from the N-terminus, the 252-residue chain is Triosephosphate isomerase (252 aa).

10-12 (NWK) is a binding site for substrate. The active-site Electrophile is histidine 96. Residue glutamate 168 is the Proton acceptor of the active site. Residues glycine 174, serine 214, and 235-236 (GG) each bind substrate.

Belongs to the triosephosphate isomerase family. In terms of assembly, homodimer.

It localises to the cytoplasm. The enzyme catalyses D-glyceraldehyde 3-phosphate = dihydroxyacetone phosphate. It functions in the pathway carbohydrate biosynthesis; gluconeogenesis. Its pathway is carbohydrate degradation; glycolysis; D-glyceraldehyde 3-phosphate from glycerone phosphate: step 1/1. Functionally, involved in the gluconeogenesis. Catalyzes stereospecifically the conversion of dihydroxyacetone phosphate (DHAP) to D-glyceraldehyde-3-phosphate (G3P). The sequence is that of Triosephosphate isomerase from Lactobacillus delbrueckii subsp. bulgaricus (strain ATCC 11842 / DSM 20081 / BCRC 10696 / JCM 1002 / NBRC 13953 / NCIMB 11778 / NCTC 12712 / WDCM 00102 / Lb 14).